Here is a 237-residue protein sequence, read N- to C-terminus: Ly6/PLAUR domain-containing protein 8 (237 aa).

Positions 1-19 are cleaved as a signal peptide; sequence MKGILVAGITAVLVAAVES. Residues asparagine 45, asparagine 73, asparagine 107, asparagine 118, asparagine 132, asparagine 172, asparagine 175, and asparagine 185 are each glycosylated (N-linked (GlcNAc...) asparagine). The region spanning 125-176 is the UPAR/Ly6 domain; the sequence is CPACYESNGTSCHGKPWKCYEEEQCVFLVAELKNDIESKSLVLKGCSNVSNA. The GPI-anchor amidated asparagine moiety is linked to residue asparagine 215. Residues 216–237 constitute a propeptide, removed in mature form; sequence VGSKASLYLLALASLLLRGLLP.

This sequence belongs to the CNF-like-inhibitor family. Post-translationally, highly N-glycosylated. Not O-glycosylated. In terms of processing, GPI-anchored. The GPI-anchor is cleaved, leading to secretion into the colonic lumen. Expressed in the large intestine. Preferentially expressed on the epithelial layer exposed to the lumen (at protein level).

The protein resides in the cell membrane. It is found in the secreted. Its function is as follows. Secreted protein specifically required to prevent invasion of Gram-negative bacteria in the inner mucus layer of the colon epithelium, a portion of the large intestine which is free of commensal microbiota. Prevents invasion of flagellated microbiota by binding to the flagellum of bacteria, such as P.mirabilis, thereby inhibiting bacterial motility in the intestinal lumen. Segregation of intestinal bacteria and epithelial cells in the colon is required to preserve intestinal homeostasis. The chain is Ly6/PLAUR domain-containing protein 8 from Homo sapiens (Human).